A 176-amino-acid polypeptide reads, in one-letter code: Adenine phosphoribosyltransferase (176 aa).

The protein belongs to the purine/pyrimidine phosphoribosyltransferase family. As to quaternary structure, homodimer.

It is found in the cytoplasm. The enzyme catalyses AMP + diphosphate = 5-phospho-alpha-D-ribose 1-diphosphate + adenine. Its pathway is purine metabolism; AMP biosynthesis via salvage pathway; AMP from adenine: step 1/1. Its function is as follows. Catalyzes a salvage reaction resulting in the formation of AMP, that is energically less costly than de novo synthesis. This is Adenine phosphoribosyltransferase from Leuconostoc mesenteroides subsp. mesenteroides (strain ATCC 8293 / DSM 20343 / BCRC 11652 / CCM 1803 / JCM 6124 / NCDO 523 / NBRC 100496 / NCIMB 8023 / NCTC 12954 / NRRL B-1118 / 37Y).